The chain runs to 250 residues: Imidazole glycerol phosphate synthase subunit HisF (250 aa).

Residues Asp-11 and Asp-130 contribute to the active site.

It belongs to the HisA/HisF family. As to quaternary structure, heterodimer of HisH and HisF.

It is found in the cytoplasm. It catalyses the reaction 5-[(5-phospho-1-deoxy-D-ribulos-1-ylimino)methylamino]-1-(5-phospho-beta-D-ribosyl)imidazole-4-carboxamide + L-glutamine = D-erythro-1-(imidazol-4-yl)glycerol 3-phosphate + 5-amino-1-(5-phospho-beta-D-ribosyl)imidazole-4-carboxamide + L-glutamate + H(+). It functions in the pathway amino-acid biosynthesis; L-histidine biosynthesis; L-histidine from 5-phospho-alpha-D-ribose 1-diphosphate: step 5/9. Its function is as follows. IGPS catalyzes the conversion of PRFAR and glutamine to IGP, AICAR and glutamate. The HisF subunit catalyzes the cyclization activity that produces IGP and AICAR from PRFAR using the ammonia provided by the HisH subunit. The protein is Imidazole glycerol phosphate synthase subunit HisF of Bacteroides fragilis (strain YCH46).